A 444-amino-acid chain; its full sequence is Phosphoglucosamine mutase (444 aa).

The active-site Phosphoserine intermediate is the Ser102. 4 residues coordinate Mg(2+): Ser102, Asp241, Asp243, and Asp245. Position 102 is a phosphoserine (Ser102).

This sequence belongs to the phosphohexose mutase family. Requires Mg(2+) as cofactor. In terms of processing, activated by phosphorylation.

The enzyme catalyses alpha-D-glucosamine 1-phosphate = D-glucosamine 6-phosphate. In terms of biological role, catalyzes the conversion of glucosamine-6-phosphate to glucosamine-1-phosphate. The chain is Phosphoglucosamine mutase from Actinobacillus pleuropneumoniae serotype 7 (strain AP76).